Here is an 823-residue protein sequence, read N- to C-terminus: Sphingomyelin phosphodiesterase 4 (823 aa).

Phosphoserine is present on residues S130 and S245. T665 is modified (phosphothreonine). Residue S749 is modified to Phosphoserine. A helical transmembrane segment spans residues 776–796 (LLLLLMAFFVASLFCIGPLSC).

Mg(2+) serves as cofactor. In terms of tissue distribution, expressed in skeletal muscle (at protein level). Expressed in skeletal muscle but a lower levels than isoform 1 (at protein level).

It is found in the endoplasmic reticulum membrane. The protein resides in the golgi apparatus membrane. It localises to the nucleus envelope. The protein localises to the cell membrane. Its subcellular location is the sarcolemma. It carries out the reaction a sphingomyelin + H2O = phosphocholine + an N-acylsphing-4-enine + H(+). Activated by phosphatidylserine and tumor necrosis factor (TNF). Inhibited by scyphostatin. Functionally, catalyzes the hydrolysis of membrane sphingomyelin to form phosphorylcholine and ceramide. It has a relevant role in the homeostasis of membrane sphingolipids, thereby influencing membrane integrity, and endoplasmic reticulum organization and function. May sensitize cells to DNA damage-induced apoptosis. In skeletal muscle, mediates TNF-stimulated oxidant production. The sequence is that of Sphingomyelin phosphodiesterase 4 (Smpd4) from Mus musculus (Mouse).